Here is an 864-residue protein sequence, read N- to C-terminus: MHERYVPADVEAAAQGDWRAADAYKTREDSQKPKFYCVSMLPYPSGKLHMGHVRNYTINDVMYRYLRMNGYNTLMPMGWDAFGMPAENAAMANGVPPAKWTYDNIDYMKGQMQSMGLAIDWSREIATCKPDYYKWNQWLFLKMLEKGIAYKKTGTVNWDPVDQTVLANEQVIDGRGWRSGALVEKREIPMYYLRITQYADELLNDLDGLGWPERVKIMQQNWIGKSFGVNFGFPYELDGEKALLRVFTTRADTIMGVTFCAVAAEHPLATRLAQGKPELQAFIDECKRGGVAEADVATMEKKGVATGFSVSHPLTGEPVEVWIGNYVLMSYGEGAVMGVPGHDERDFAFAKKYGLPIKQVIASEGQTYSLDAWQEWYGDKETAVCVNSGKYDGLRYADAVDAVAADLKAGGYGDKQVTWRLRDWGVSRQRYWGTPIPIIHCPSCGDVPVPEQDLPVVLPEDLVPDGSGNPLAKSEAFLNCSCPKCGAAAKRETDTMDTFVDSSWYFSRYTAPDADTMVDARTDYWMPMDQYIGGIEHAILHLLYSRFWTKVMRDLGLVKFGEPAKNLLTQGMVLNETFYREDASGKKTWYNPADVTVTHDDKGRPVGATLNTDGQPVVLGGIEKMSKSKNNGVDPQVLIDQYGADTARLFTMFAAPPEQQLEWSGAGVEGASRFLRRVWSFGATNREALAARAGFDAAALGDADKALRREIYSVLKQADFDYQRLQYNTVVSAAMKMLNAIDGAKGATPAVLRETYGVLLRVLYPVVPHVTFELWKALGYADEFGPLLDAPWPKVDEAALEQAEIELVLQVNGKVRGALKVAKGASRDAIEAAAVADEAFAKFSDGKPAKKIVVVPGRLVNIVV.

Residues 42 to 52 (PYPSGKLHMGH) carry the 'HIGH' region motif. Positions 624–628 (KMSKS) match the 'KMSKS' region motif. Lys-627 is an ATP binding site.

The protein belongs to the class-I aminoacyl-tRNA synthetase family.

It is found in the cytoplasm. It carries out the reaction tRNA(Leu) + L-leucine + ATP = L-leucyl-tRNA(Leu) + AMP + diphosphate. This is Leucine--tRNA ligase from Burkholderia ambifaria (strain MC40-6).